The sequence spans 117 residues: Small ribosomal subunit protein eS25 (117 aa).

The segment at 1–38 is disordered; that stretch reads MPPKKDAKSSAKQPQKTQKKKEGSGGGKAKKKKWSKGK. Residues 28–37 show a composition bias toward basic residues; sequence KAKKKKWSKG.

It belongs to the eukaryotic ribosomal protein eS25 family.

The chain is Small ribosomal subunit protein eS25 (RpS25) from Drosophila melanogaster (Fruit fly).